The following is a 502-amino-acid chain: Lysine--tRNA ligase (502 aa).

Glu-411 and Glu-418 together coordinate Mg(2+).

It belongs to the class-II aminoacyl-tRNA synthetase family. As to quaternary structure, homodimer. Requires Mg(2+) as cofactor.

It is found in the cytoplasm. The catalysed reaction is tRNA(Lys) + L-lysine + ATP = L-lysyl-tRNA(Lys) + AMP + diphosphate. The chain is Lysine--tRNA ligase from Clostridium kluyveri (strain ATCC 8527 / DSM 555 / NBRC 12016 / NCIMB 10680 / K1).